The following is a 144-amino-acid chain: AP-4 complex subunit sigma-1 (144 aa).

It belongs to the adaptor complexes small subunit family. As to quaternary structure, adaptor protein complex 4 (AP-4) is a heterotetramer composed of two large adaptins (epsilon-type subunit AP4E1 and beta-type subunit AP4B1), a medium adaptin (mu-type subunit AP4M1) and a small adaptin (sigma-type AP4S1). As to expression, widely expressed.

It localises to the golgi apparatus. The protein resides in the trans-Golgi network membrane. Component of the adaptor protein complex 4 (AP-4). Adaptor protein complexes are vesicle coat components involved both in vesicle formation and cargo selection. They control the vesicular transport of proteins in different trafficking pathways. AP-4 forms a non clathrin-associated coat on vesicles departing the trans-Golgi network (TGN) and may be involved in the targeting of proteins from the trans-Golgi network (TGN) to the endosomal-lysosomal system. It is also involved in protein sorting to the basolateral membrane in epithelial cells and the proper asymmetric localization of somatodendritic proteins in neurons. AP-4 is involved in the recognition and binding of tyrosine-based sorting signals found in the cytoplasmic part of cargos, but may also recognize other types of sorting signal. The polypeptide is AP-4 complex subunit sigma-1 (Homo sapiens (Human)).